The sequence spans 339 residues: Glycerol-3-phosphate dehydrogenase [NAD(P)+] (339 aa).

Residues Ser13, Trp14, and Lys108 each contribute to the NADPH site. Residues Lys108, Gly139, and Ser141 each contribute to the sn-glycerol 3-phosphate site. Ala143 contributes to the NADPH binding site. 5 residues coordinate sn-glycerol 3-phosphate: Lys194, Asp247, Ser257, Arg258, and Asn259. Lys194 (proton acceptor) is an active-site residue. Arg258 lines the NADPH pocket. NADPH-binding residues include Val282 and Glu284.

The protein belongs to the NAD-dependent glycerol-3-phosphate dehydrogenase family.

It localises to the cytoplasm. The catalysed reaction is sn-glycerol 3-phosphate + NAD(+) = dihydroxyacetone phosphate + NADH + H(+). The enzyme catalyses sn-glycerol 3-phosphate + NADP(+) = dihydroxyacetone phosphate + NADPH + H(+). Its pathway is membrane lipid metabolism; glycerophospholipid metabolism. Functionally, catalyzes the reduction of the glycolytic intermediate dihydroxyacetone phosphate (DHAP) to sn-glycerol 3-phosphate (G3P), the key precursor for phospholipid synthesis. The polypeptide is Glycerol-3-phosphate dehydrogenase [NAD(P)+] (Streptococcus equi subsp. zooepidemicus (strain H70)).